The following is a 692-amino-acid chain: Peroxisomal primary amine oxidase (692 aa).

Over residues 1–22 (MERLRQIASQATAASAAPARPA) the composition is skewed to low complexity. Residues 1-26 (MERLRQIASQATAASAAPARPAHPLD) form a disordered region. Asparagine 243 carries N-linked (GlcNAc...) asparagine glycosylation. Position 317 to 328 (317 to 328 (ALDIGEYGAGYM)) interacts with substrate. Aspartate 319 acts as the Proton acceptor in catalysis. Cysteine 338 and cysteine 364 are joined by a disulfide. 402 to 407 (AANYEY) contributes to the substrate binding site. Tyrosine 405 functions as the Schiff-base intermediate with substrate; via topaquinone in the catalytic mechanism. Tyrosine 405 bears the 2',4',5'-topaquinone mark. Cu cation-binding residues include histidine 456 and histidine 458. Aspartate 465, aspartate 613, and isoleucine 614 together coordinate Mn(2+). A Cu cation-binding site is contributed by histidine 624.

Belongs to the copper/topaquinone oxidase family. As to quaternary structure, homodimer. Cu cation is required as a cofactor. Requires Zn(2+) as cofactor. It depends on L-topaquinone as a cofactor. The cofactor is Mn(2+). Topaquinone (TPQ) is generated by copper-dependent autoxidation of a specific tyrosyl residue.

It localises to the peroxisome. It carries out the reaction a primary methyl amine + O2 + H2O = an aldehyde + H2O2 + NH4(+). The protein is Peroxisomal primary amine oxidase (AMO) of Pichia angusta (Yeast).